The following is a 148-amino-acid chain: MLMPKRTKFRKQQRGRMNGAACRGNEIEFGTYALQALEPVWMTSRQIEAARRAMTRYIRRGGKIYIRVFPDKPVTQRAAETRMGSGKGAPEYWVCVVKPGRILFEIDGVAEEIAREAMRLAAAKLPIKSRFIVKSETAPAEEPTNAPT.

It belongs to the universal ribosomal protein uL16 family. In terms of assembly, part of the 50S ribosomal subunit.

Functionally, binds 23S rRNA and is also seen to make contacts with the A and possibly P site tRNAs. The protein is Large ribosomal subunit protein uL16 of Gloeobacter violaceus (strain ATCC 29082 / PCC 7421).